Here is a 626-residue protein sequence, read N- to C-terminus: Probable potassium transport system protein Kup (626 aa).

A run of 13 helical transmembrane segments spans residues 8–28, 44–64, 102–122, 139–159, 171–191, 196–216, 217–237, 249–269, 281–301, 339–359, 377–397, 399–419, and 421–441; these read VALP…IGTS, ISEA…TLSI, IYLI…GIIT, PAFD…LFMV, FGPI…YSII, ILWF…PFVA, FVAM…YADM, WFIV…ALLL, LLVP…AAVI, IYVP…IILF, MLCV…WPWW, VTLF…STSL, and ILSG…ILMT.

This sequence belongs to the HAK/KUP transporter (TC 2.A.72) family.

Its subcellular location is the cell inner membrane. The enzyme catalyses K(+)(in) + H(+)(in) = K(+)(out) + H(+)(out). In terms of biological role, transport of potassium into the cell. Likely operates as a K(+):H(+) symporter. In Acinetobacter baylyi (strain ATCC 33305 / BD413 / ADP1), this protein is Probable potassium transport system protein Kup.